Consider the following 82-residue polypeptide: Photosystem I iron-sulfur center (82 aa).

4Fe-4S ferredoxin-type domains are found at residues 2–31 (AHSV…MVPW) and 40–69 (IAAA…IRVY). The [4Fe-4S] cluster site is built by C11, C14, C17, C21, C49, C52, C55, and C59.

The cyanobacterial PSI reaction center is composed of one copy each of PsaA,B,C,D,E,F,I,J,K,L,M and X, and forms trimeric complexes. [4Fe-4S] cluster serves as cofactor.

It localises to the cellular thylakoid membrane. It catalyses the reaction reduced [plastocyanin] + hnu + oxidized [2Fe-2S]-[ferredoxin] = oxidized [plastocyanin] + reduced [2Fe-2S]-[ferredoxin]. Apoprotein for the two 4Fe-4S centers FA and FB of photosystem I (PSI); essential for photochemical activity. FB is the terminal electron acceptor of PSI, donating electrons to ferredoxin. The C-terminus interacts with PsaA/B/D and helps assemble the protein into the PSI complex. Required for binding of PsaD and PsaE to PSI. PSI is a plastocyanin/cytochrome c6-ferredoxin oxidoreductase, converting photonic excitation into a charge separation, which transfers an electron from the donor P700 chlorophyll pair to the spectroscopically characterized acceptors A0, A1, FX, FA and FB in turn. The protein is Photosystem I iron-sulfur center of Synechococcus sp. (strain JA-2-3B'a(2-13)) (Cyanobacteria bacterium Yellowstone B-Prime).